The following is a 531-amino-acid chain: UDP-glucuronosyltransferase 2B13 (531 aa).

The signal sequence occupies residues M1–C24. N-linked (GlcNAc...) asparagine glycosylation is found at N69, N101, and N317. Residues V495–V511 form a helical membrane-spanning segment.

It belongs to the UDP-glycosyltransferase family.

The protein localises to the microsome membrane. It localises to the endoplasmic reticulum membrane. It carries out the reaction glucuronate acceptor + UDP-alpha-D-glucuronate = acceptor beta-D-glucuronoside + UDP + H(+). Its function is as follows. UDPGT is of major importance in the conjugation and subsequent elimination of potentially toxic xenobiotics and endogenous compounds. Acts on small phenolic agents such as 2-beta-naphthol and 4-methylumbelliferone as well as bulky phenolic compounds like 2-hydroxy- and 4-hydroxybiphenyl. In contrast to 2B16 it is active toward octylgallate. This is UDP-glucuronosyltransferase 2B13 (UGT2B13) from Oryctolagus cuniculus (Rabbit).